A 666-amino-acid polypeptide reads, in one-letter code: Magnesium-chelatase 67 kDa subunit (666 aa).

Gly-37–Thr-44 lines the ATP pocket. The tract at residues Leu-327–Gln-367 is disordered. Over residues Gln-335–Pro-347 the composition is skewed to pro residues. The 187-residue stretch at Leu-475–Val-661 folds into the VWFA domain.

Belongs to the Mg-chelatase subunits D/I family.

It carries out the reaction protoporphyrin IX + Mg(2+) + ATP + H2O = Mg-protoporphyrin IX + ADP + phosphate + 3 H(+). It functions in the pathway porphyrin-containing compound metabolism; bacteriochlorophyll biosynthesis. In terms of biological role, involved in bacteriochlorophyll biosynthesis; introduces a magnesium ion into protoporphyrin IX to yield Mg-protoporphyrin IX. The polypeptide is Magnesium-chelatase 67 kDa subunit (bchD) (Heliobacterium mobile (Heliobacillus mobilis)).